We begin with the raw amino-acid sequence, 184 residues long: GMP synthase [glutamine-hydrolyzing] subunit A (184 aa).

The Glutamine amidotransferase type-1 domain maps to 3 to 184 (PICVVNNYGQ…YENFDAICTE (182 aa)). Catalysis depends on Cys-75, which acts as the Nucleophile. Residues His-162 and Glu-164 contribute to the active site.

As to quaternary structure, heterodimer composed of a glutamine amidotransferase subunit (A) and a GMP-binding subunit (B).

The enzyme catalyses XMP + L-glutamine + ATP + H2O = GMP + L-glutamate + AMP + diphosphate + 2 H(+). Its pathway is purine metabolism; GMP biosynthesis; GMP from XMP (L-Gln route): step 1/1. Catalyzes the synthesis of GMP from XMP. The polypeptide is GMP synthase [glutamine-hydrolyzing] subunit A (Methanoregula boonei (strain DSM 21154 / JCM 14090 / 6A8)).